The chain runs to 101 residues: UPF0473 protein SUB1774 (101 aa).

The protein belongs to the UPF0473 family.

This Streptococcus uberis (strain ATCC BAA-854 / 0140J) protein is UPF0473 protein SUB1774.